The chain runs to 200 residues: UPF0316 protein SAUSA300_1892 (200 aa).

3 helical membrane passes run 8–28 (PWLMVLTIFIINICYVTFLTM), 40–60 (IAASVSFLEVLVYIVGLGLVM), and 66–86 (IQNIIAYAFGFSIGIIVGMKI).

It belongs to the UPF0316 family.

The protein localises to the cell membrane. The polypeptide is UPF0316 protein SAUSA300_1892 (Staphylococcus aureus (strain USA300)).